Reading from the N-terminus, the 785-residue chain is Mitochondrial intermediate peptidase (785 aa).

Residues 1–26 (MLKVTTSRPWVCSRCVRRQVQSRRRL) constitute a mitochondrion transit peptide. The tract at residues 26–51 (LATASTQYRESRPVPVDNSAPGAKRD) is disordered. His566 provides a ligand contact to Zn(2+). Residue Glu567 is part of the active site. Positions 570 and 573 each coordinate Zn(2+).

The protein belongs to the peptidase M3 family. The cofactor is Zn(2+).

Its subcellular location is the mitochondrion matrix. The catalysed reaction is Release of an N-terminal octapeptide as second stage of processing of some proteins imported into the mitochondrion.. Functionally, cleaves proteins, imported into the mitochondrion, to their mature size. While most mitochondrial precursor proteins are processed to the mature form in one step by mitochondrial processing peptidase (MPP), the sequential cleavage by MIP of an octapeptide after initial processing by MPP is a required step for a subgroup of nuclear-encoded precursor proteins destined for the matrix or the inner membrane. The sequence is that of Mitochondrial intermediate peptidase (oct1) from Botryotinia fuckeliana (strain B05.10) (Noble rot fungus).